The following is a 123-amino-acid chain: Large ribosomal subunit protein uL14 (123 aa).

The protein belongs to the universal ribosomal protein uL14 family. As to quaternary structure, part of the 50S ribosomal subunit. Forms a cluster with proteins L3 and L19. In the 70S ribosome, L14 and L19 interact and together make contacts with the 16S rRNA in bridges B5 and B8.

Binds to 23S rRNA. Forms part of two intersubunit bridges in the 70S ribosome. The protein is Large ribosomal subunit protein uL14 of Hamiltonella defensa subsp. Acyrthosiphon pisum (strain 5AT).